We begin with the raw amino-acid sequence, 430 residues long: Asparagine--tRNA ligase (430 aa).

This sequence belongs to the class-II aminoacyl-tRNA synthetase family. In terms of assembly, homodimer.

It localises to the cytoplasm. It catalyses the reaction tRNA(Asn) + L-asparagine + ATP = L-asparaginyl-tRNA(Asn) + AMP + diphosphate + H(+). The polypeptide is Asparagine--tRNA ligase (Staphylococcus haemolyticus (strain JCSC1435)).